Here is a 173-residue protein sequence, read N- to C-terminus: NADH-ubiquinone oxidoreductase chain 6 (173 aa).

Helical transmembrane passes span 1–21, 27–47, 48–68, 87–107, and 139–159; these read MTYF…AVAS, YGVV…LSLG, ASFV…VVFV, VIGY…IGGF, and WGAG…FVVL.

Belongs to the complex I subunit 6 family.

It localises to the mitochondrion membrane. The enzyme catalyses a ubiquinone + NADH + 5 H(+)(in) = a ubiquinol + NAD(+) + 4 H(+)(out). Functionally, core subunit of the mitochondrial membrane respiratory chain NADH dehydrogenase (Complex I) that is believed to belong to the minimal assembly required for catalysis. Complex I functions in the transfer of electrons from NADH to the respiratory chain. The immediate electron acceptor for the enzyme is believed to be ubiquinone. The sequence is that of NADH-ubiquinone oxidoreductase chain 6 (MT-ND6) from Brachyramphus brevirostris (Kittlitz's murrelet).